Reading from the N-terminus, the 165-residue chain is NADPH-dependent 7-cyano-7-deazaguanine reductase (165 aa).

The active-site Thioimide intermediate is the cysteine 56. The Proton donor role is filled by aspartate 63. Residues 78–80 and 97–98 each bind substrate; these read VES and HE. Positions 163 and 165 each coordinate Mg(2+).

Belongs to the GTP cyclohydrolase I family. QueF type 1 subfamily. As to quaternary structure, forms an asymmetric tunnel-fold homodecamer of two head-to-head facing pentamers, harboring 10 active sites at the intersubunit interfaces. Requires Does not require a metal cofactor. as cofactor.

It is found in the cytoplasm. It carries out the reaction 7-aminomethyl-7-carbaguanine + 2 NADP(+) = 7-cyano-7-deazaguanine + 2 NADPH + 3 H(+). It functions in the pathway tRNA modification; tRNA-queuosine biosynthesis. Its activity is regulated as follows. Activity is strongly inhibited by Cu(2+) and Fe(3+). Its function is as follows. Catalyzes the NADPH-dependent reduction of 7-cyano-7-deazaguanine (preQ0) to 7-aminomethyl-7-deazaguanine (preQ1), a late step in the queuosine pathway. This chain is NADPH-dependent 7-cyano-7-deazaguanine reductase (queF), found in Bacillus subtilis (strain 168).